The sequence spans 143 residues: SsrA-binding protein (143 aa).

Belongs to the SmpB family.

Its subcellular location is the cytoplasm. Required for rescue of stalled ribosomes mediated by trans-translation. Binds to transfer-messenger RNA (tmRNA), required for stable association of tmRNA with ribosomes. tmRNA and SmpB together mimic tRNA shape, replacing the anticodon stem-loop with SmpB. tmRNA is encoded by the ssrA gene; the 2 termini fold to resemble tRNA(Ala) and it encodes a 'tag peptide', a short internal open reading frame. During trans-translation Ala-aminoacylated tmRNA acts like a tRNA, entering the A-site of stalled ribosomes, displacing the stalled mRNA. The ribosome then switches to translate the ORF on the tmRNA; the nascent peptide is terminated with the 'tag peptide' encoded by the tmRNA and targeted for degradation. The ribosome is freed to recommence translation, which seems to be the essential function of trans-translation. This chain is SsrA-binding protein, found in Mycoplasmoides gallisepticum (strain R(low / passage 15 / clone 2)) (Mycoplasma gallisepticum).